The primary structure comprises 283 residues: MPELPEVETVRRGLEPAMAGRLIAEARVNRADLRWPFPPRMAERLTGQRVLRLRRRSKYILADLSGGQSLLIHLGMSGRMLVSGAQLGEFFHDHPAPSRHDHVVLEMEGGARITFNDARRFGAMDLVATEAAEAHPLLAVLGPEPLGNAFDGAYLAARLEGRRTPIKAALLDQRIVAGLGNIYVCEVLFRAGLAPGRLAGSLSRAESEGLVPLIREVLLEAIEAGGSSLRDYRQADGELGYFQHTFRVYGREGLPCVTPGCSGTVGRIVQSGRSSFHCPLCQR.

Pro-2 (schiff-base intermediate with DNA) is an active-site residue. Glu-3 serves as the catalytic Proton donor. Lys-58 serves as the catalytic Proton donor; for beta-elimination activity. Residues His-100, Arg-119, and Arg-162 each contribute to the DNA site. Residues 247–283 form an FPG-type zinc finger; it reads RVYGREGLPCVTPGCSGTVGRIVQSGRSSFHCPLCQR. Arg-273 functions as the Proton donor; for delta-elimination activity in the catalytic mechanism.

The protein belongs to the FPG family. Monomer. It depends on Zn(2+) as a cofactor.

It carries out the reaction Hydrolysis of DNA containing ring-opened 7-methylguanine residues, releasing 2,6-diamino-4-hydroxy-5-(N-methyl)formamidopyrimidine.. The catalysed reaction is 2'-deoxyribonucleotide-(2'-deoxyribose 5'-phosphate)-2'-deoxyribonucleotide-DNA = a 3'-end 2'-deoxyribonucleotide-(2,3-dehydro-2,3-deoxyribose 5'-phosphate)-DNA + a 5'-end 5'-phospho-2'-deoxyribonucleoside-DNA + H(+). Its function is as follows. Involved in base excision repair of DNA damaged by oxidation or by mutagenic agents. Acts as a DNA glycosylase that recognizes and removes damaged bases. Has a preference for oxidized purines, such as 7,8-dihydro-8-oxoguanine (8-oxoG). Has AP (apurinic/apyrimidinic) lyase activity and introduces nicks in the DNA strand. Cleaves the DNA backbone by beta-delta elimination to generate a single-strand break at the site of the removed base with both 3'- and 5'-phosphates. This is Formamidopyrimidine-DNA glycosylase from Cereibacter sphaeroides (strain KD131 / KCTC 12085) (Rhodobacter sphaeroides).